A 380-amino-acid polypeptide reads, in one-letter code: Chaperone protein DnaJ (380 aa).

In terms of domain architecture, J spans 5-69; sequence DYYEILGVSK…QKRAHYDQFG (65 aa). Residues 135 to 217 form a CR-type zinc finger; it reads GKETDIEIPR…CGGTGRVKKR (83 aa). Residues C148, C151, C165, C168, C191, C194, C205, and C208 each coordinate Zn(2+). 4 CXXCXGXG motif repeats span residues 148–155, 165–172, 191–198, and 205–212; these read CDTCHGTG, CSYCHGTG, CPYCGGTG, and CTTCGGTG.

This sequence belongs to the DnaJ family. Homodimer. Zn(2+) serves as cofactor.

The protein resides in the cytoplasm. Functionally, participates actively in the response to hyperosmotic and heat shock by preventing the aggregation of stress-denatured proteins and by disaggregating proteins, also in an autonomous, DnaK-independent fashion. Unfolded proteins bind initially to DnaJ; upon interaction with the DnaJ-bound protein, DnaK hydrolyzes its bound ATP, resulting in the formation of a stable complex. GrpE releases ADP from DnaK; ATP binding to DnaK triggers the release of the substrate protein, thus completing the reaction cycle. Several rounds of ATP-dependent interactions between DnaJ, DnaK and GrpE are required for fully efficient folding. Also involved, together with DnaK and GrpE, in the DNA replication of plasmids through activation of initiation proteins. The chain is Chaperone protein DnaJ from Geobacillus sp. (strain WCH70).